Reading from the N-terminus, the 396-residue chain is NAD(P)H oxidoreductase RTN4IP1, mitochondrial (396 aa).

The N-terminal 40 residues, 1–40 (MGFLKTCVFRRNACTAVCFWRSQVVQKPSVRKISTTSPRS), are a transit peptide targeting the mitochondrion. The Enoyl reductase (ER) domain occupies 52 to 393 (GSNEVLRFTQ…RGHARGKTVI (342 aa)). NADPH-binding residues include Ser214, Gly216, Val217, Ser237, Tyr255, Asn276, Leu300, Ala341, Phe343, His386, Ala387, and Arg388.

Belongs to the zinc-containing alcohol dehydrogenase family. Quinone oxidoreductase subfamily. Interacts with RTN4, UQCRC1 and UQCRC2.

It is found in the mitochondrion matrix. Its subcellular location is the mitochondrion outer membrane. It catalyses the reaction a 3-demethylubiquinone + NADH + 2 H(+) = a 3-demethylubiquinol + NAD(+). The enzyme catalyses a 3-demethylubiquinone + NADPH + 2 H(+) = a 3-demethylubiquinol + NADP(+). The catalysed reaction is 3-demethylubiquinone-10 + NADH + 2 H(+) = 3-demethylubiquinol-10 + NAD(+). It carries out the reaction 3-demethylubiquinone-10 + NADPH + 2 H(+) = 3-demethylubiquinol-10 + NADP(+). Its pathway is cofactor biosynthesis; ubiquinone biosynthesis. Its function is as follows. NAD(P)H oxidoreductase involved in the ubiquinone biosynthetic pathway. Required for the O-methyltransferase activity of COQ3. Able to catalyze the oxidoreduction of 3-demethylubiquinone into 3-demethylubiquinol in vitro. However, it is unclear if 3-demethylubiquinone constitutes a substrate in vivo. May also play a role in the regulation of retinal ganglion cell (RGC) neurite outgrowth, and hence in the development of the inner retina and optic nerve. Appears to be a potent inhibitor of regeneration following spinal cord injury. This is NAD(P)H oxidoreductase RTN4IP1, mitochondrial (RTN4IP1) from Bos taurus (Bovine).